Reading from the N-terminus, the 475-residue chain is GTPase Der (475 aa).

EngA-type G domains lie at 3-167 (LTIA…GGER) and 205-380 (LRIA…RVWN). GTP is bound by residues 9 to 16 (GRPNVGKS), 56 to 60 (DTAGL), 119 to 122 (NKSE), 211 to 218 (GRPNTGKS), 258 to 262 (DTAGL), and 323 to 326 (NKWD). The 85-residue stretch at 381-465 (RRISTGKLNR…PIRISLRASD (85 aa)) folds into the KH-like domain.

It belongs to the TRAFAC class TrmE-Era-EngA-EngB-Septin-like GTPase superfamily. EngA (Der) GTPase family. As to quaternary structure, associates with the 50S ribosomal subunit.

Its function is as follows. GTPase that plays an essential role in the late steps of ribosome biogenesis. The polypeptide is GTPase Der (Bartonella henselae (strain ATCC 49882 / DSM 28221 / CCUG 30454 / Houston 1) (Rochalimaea henselae)).